A 103-amino-acid polypeptide reads, in one-letter code: Iron-sulfur cluster assembly protein CyaY (103 aa).

It belongs to the frataxin family.

Its function is as follows. Involved in iron-sulfur (Fe-S) cluster assembly. May act as a regulator of Fe-S biogenesis. The sequence is that of Iron-sulfur cluster assembly protein CyaY from Rickettsia rickettsii (strain Iowa).